The sequence spans 653 residues: MKTAPITPGRLAFSPDGVPLAPEFGDVYHPAAGALQQAHHVFLGGNRLPARWGGRGRFVILETGFGLGNNFLATWDAWQRDPQRCERLVFVSIEKHPLTREDLARAHAASPLPELARALVSAWPLSTPNLHPIAFEGGRVQLLLGFGDVALLLPQLVVSVDAFFLDGFAPARNPEMWEPRRLQRLGRLAAPGATAATWSAARVVRDGLSAAGFTVETTAGTGGKRDITVARFTPRHIAVPPPGGWHAHDAASREALVIGAGLAGCAAAWALSQQGWQCQLLDRAAEPADVTSGNPAGLFHGSFHRDDGPHARTLRAAALATERLAGAWIAQGRVSGQLAGCLRLESRWSDDAARAAMAAQQIAPGYIDWMDRAVASTLSGLALPSGAWFYPGGGWLAPRDYARELLARSGSLFRGGIDVATIERHSGLWRVLDEQRQVIAEAPVLVLANGLGANGLLASGRGEVPWPLTAVRGQISSLATDGHPATLPCPRLPVAGGGYVLPQTGGRLLFGATSQPDDIDPALRDADHRFNLQQLAGLSGCDVEAWSSLPWQGRVGWRAVTSDRLPLIGAVPDLEALDRTSRADQPRFVPRQRDARGGLYVFTGLGSRGITWAALGGQLLASWISGAPCPLEADLRDALDPARYALPRWRSDS.

Residues 1 to 233 form a tRNA (mnm(5)s(2)U34)-methyltransferase region; that stretch reads MKTAPITPGR…KRDITVARFT (233 aa). Residues 258 to 653 are FAD-dependent cmnm(5)s(2)U34 oxidoreductase; that stretch reads IGAGLAGCAA…YALPRWRSDS (396 aa).

It in the N-terminal section; belongs to the methyltransferase superfamily. tRNA (mnm(5)s(2)U34)-methyltransferase family. The protein in the C-terminal section; belongs to the DAO family. FAD is required as a cofactor.

It localises to the cytoplasm. The enzyme catalyses 5-aminomethyl-2-thiouridine(34) in tRNA + S-adenosyl-L-methionine = 5-methylaminomethyl-2-thiouridine(34) in tRNA + S-adenosyl-L-homocysteine + H(+). In terms of biological role, catalyzes the last two steps in the biosynthesis of 5-methylaminomethyl-2-thiouridine (mnm(5)s(2)U) at the wobble position (U34) in tRNA. Catalyzes the FAD-dependent demodification of cmnm(5)s(2)U34 to nm(5)s(2)U34, followed by the transfer of a methyl group from S-adenosyl-L-methionine to nm(5)s(2)U34, to form mnm(5)s(2)U34. In Methylibium petroleiphilum (strain ATCC BAA-1232 / LMG 22953 / PM1), this protein is tRNA 5-methylaminomethyl-2-thiouridine biosynthesis bifunctional protein MnmC.